The sequence spans 276 residues: Protein canopy homolog 3 (276 aa).

A signal peptide spans 1–16 (MNVFISVVLFLGSARA). The region spanning 30–269 (NKCEVCKFVS…EEEIQKKVPL (240 aa)) is the Saposin B-type domain. Cystine bridges form between Cys-32–Cys-190, Cys-35–Cys-178, and Cys-88–Cys-150. Positions 137–162 (NETSAEVADLKKQCDVMVEQYEDVIE) form a coiled coil. Residues 206–276 (AEDKKKKKGK…VPLNQPKTEL (71 aa)) form a disordered region. Basic residues-rich tracts occupy residues 210-219 (KKKKGKKKKG) and 228-239 (KEKKVKKKKKKS). Over residues 240-252 (KISDSESSKRRME) the composition is skewed to basic and acidic residues.

The protein belongs to the canopy family.

It is found in the endoplasmic reticulum. In terms of biological role, toll-like receptor (TLR)-specific co-chaperone for HSP90B1. Required for proper TLR folding and hence controls TLR exit from the endoplasmic reticulum. Consequently, required for immune responses. The chain is Protein canopy homolog 3 (cnpy3) from Danio rerio (Zebrafish).